A 1012-amino-acid polypeptide reads, in one-letter code: RAS protein activator like-3 (1012 aa).

Disordered stretches follow at residues 1-128, 147-196, and 208-229; these read MDPP…TPDV, GNED…QIHN, and KKAK…ALGS. A compositionally biased stretch (polar residues) spans 7–21; the sequence is SRASQTQPVAPSPLT. A Phosphoserine modification is found at S18. A compositionally biased stretch (gly residues) spans 27-39; the sequence is SGGGAEKGAGGFR. The span at 50-62 shows a compositional bias: polar residues; it reads QSHQETTASSQPA. The residue at position 51 (S51) is a Phosphoserine. Residues 100–113 show a composition bias toward acidic residues; that stretch reads SEPEPENPEPEPEL. Phosphoserine is present on residues S160, S162, S163, and S166. The segment covering 160 to 171 has biased composition (low complexity); that stretch reads SASSESSIHVAS. Basic and acidic residues predominate over residues 175-186; that stretch reads KDPDRTPGKTDP. The region spanning 193-294 is the PH domain; that stretch reads QIHNVRGLLK…WIEDLRRHFQ (102 aa). Phosphoserine is present on residues S212, S225, S229, and S232. The residue at position 235 (T235) is a Phosphothreonine. One can recognise a C2 domain in the interval 285 to 405; sequence WIEDLRRHFQ…APAAGLERWF (121 aa). One can recognise a Ras-GAP domain in the interval 475 to 683; that stretch reads GRAQALVTDL…PAMQHFLDQV (209 aa). Positions 752-887 are disordered; it reads PAPRTQGHSS…DKDQALGTHR (136 aa). S788 and S791 each carry phosphoserine. Residues 826–841 show a composition bias toward basic residues; sequence PARRRPSAGPRPRPKG. Residues 889–989 are a coiled coil; it reads VGKLAELQCE…KDTIQNLQLL (101 aa). Residues 990 to 999 are compositionally biased toward polar residues; sequence PRTSESQSQP. Residues 990–1012 are disordered; it reads PRTSESQSQPVPLKAPCINGDTT.

The protein localises to the cytoplasm. It localises to the cell cortex. Its function is as follows. Functions as a Ras GTPase-activating protein. Plays an important role in the expansion and functions of natural killer T (NKT) cells in the liver by negatively regulating RAS activity and the down-stream ERK signaling pathway. This is RAS protein activator like-3 (RASAL3) from Bos taurus (Bovine).